Here is an 89-residue protein sequence, read N- to C-terminus: Signal recognition particle 19 kDa protein (89 aa).

It belongs to the SRP19 family. Part of the signal recognition particle protein translocation system, which is composed of SRP and FtsY. Archaeal SRP consists of a 7S RNA molecule of 300 nucleotides and two protein subunits: SRP54 and SRP19.

The protein resides in the cytoplasm. Functionally, involved in targeting and insertion of nascent membrane proteins into the cytoplasmic membrane. Binds directly to 7S RNA and mediates binding of the 54 kDa subunit of the SRP. This chain is Signal recognition particle 19 kDa protein, found in Methanobrevibacter smithii (strain ATCC 35061 / DSM 861 / OCM 144 / PS).